Consider the following 52-residue polypeptide: Metchnikowin (52 aa).

An N-terminal signal peptide occupies residues 1–24 (MQLNLGAIFLALLGVMATATSVLA). Residues 25–26 (EP) constitute a propeptide that is removed on maturation. The interval 28 to 52 (RHQGPIFDTRPSPFNPNQPRPGPIY) is disordered. A compositionally biased stretch (pro residues) spans 40–52 (PFNPNQPRPGPIY).

In terms of tissue distribution, hemolymph (at protein level). Highest expression in fat body.

The protein localises to the secreted. In terms of biological role, potent antifungal and antibacterial activity against Gram-positive bacteria. This chain is Metchnikowin (Mtk), found in Drosophila melanogaster (Fruit fly).